Reading from the N-terminus, the 265-residue chain is Thiazole synthase (265 aa).

The active-site Schiff-base intermediate with DXP is lysine 106. Residues glycine 167, 193-194, and 215-216 each bind 1-deoxy-D-xylulose 5-phosphate; these read AG and NS.

This sequence belongs to the ThiG family. As to quaternary structure, homotetramer. Forms heterodimers with either ThiH or ThiS.

The protein localises to the cytoplasm. The enzyme catalyses [ThiS sulfur-carrier protein]-C-terminal-Gly-aminoethanethioate + 2-iminoacetate + 1-deoxy-D-xylulose 5-phosphate = [ThiS sulfur-carrier protein]-C-terminal Gly-Gly + 2-[(2R,5Z)-2-carboxy-4-methylthiazol-5(2H)-ylidene]ethyl phosphate + 2 H2O + H(+). It functions in the pathway cofactor biosynthesis; thiamine diphosphate biosynthesis. Its function is as follows. Catalyzes the rearrangement of 1-deoxy-D-xylulose 5-phosphate (DXP) to produce the thiazole phosphate moiety of thiamine. Sulfur is provided by the thiocarboxylate moiety of the carrier protein ThiS. In vitro, sulfur can be provided by H(2)S. In Prochlorococcus marinus subsp. pastoris (strain CCMP1986 / NIES-2087 / MED4), this protein is Thiazole synthase.